We begin with the raw amino-acid sequence, 581 residues long: Arginine--tRNA ligase (581 aa).

The 'HIGH' region motif lies at 126–136 (PNLAKEMHVGH).

It belongs to the class-I aminoacyl-tRNA synthetase family. In terms of assembly, monomer.

It localises to the cytoplasm. It catalyses the reaction tRNA(Arg) + L-arginine + ATP = L-arginyl-tRNA(Arg) + AMP + diphosphate. This chain is Arginine--tRNA ligase, found in Shewanella pealeana (strain ATCC 700345 / ANG-SQ1).